The following is a 438-amino-acid chain: Innexin inx7 (438 aa).

Over 1–23 the chain is Cytoplasmic; it reads MLNTFSSVRQYLKFDLTRVVIDN. Residues 24–44 traverse the membrane as a helical segment; that stretch reads IVFKLHYRWTFVILLVATLLI. At 45 to 58 the chain is on the extracellular side; the sequence is TSRQYIGEHIQCLS. The helical transmembrane segment at 59–79 threads the bilayer; the sequence is DGVVSPVINTFCFFTPTFTVV. The Cytoplasmic segment spans residues 80–112; it reads RDQNQTAYRPGSEPPGIGAFDPEKDTIKRHAYY. Residues 113-133 form a helical membrane-spanning segment; the sequence is QWVPFVLFFQALCFYIPHALW. Topologically, residues 134 to 283 are extracellular; that stretch reads KSWEGGRIKA…VMALNIMNEK (150 aa). A helical transmembrane segment spans residues 284–304; it reads IYIILWFWYAFLLIVTVLGLL. The Cytoplasmic segment spans residues 305–438; sequence WRILTLCFYR…STSDMAKLPV (134 aa). 2 disordered regions span residues 381-402 and 415-438; these read NDVNAYREAPPTPAKNRYPELS and RRNGSPSAGGAQGPSTSDMAKLPV. A compositionally biased stretch (low complexity) spans 418-431; it reads GSPSAGGAQGPSTS.

Belongs to the pannexin family. In terms of tissue distribution, expressed around gut lobes in embryonic stages 15-17.

The protein localises to the cell membrane. Its subcellular location is the cell junction. The protein resides in the gap junction. In terms of biological role, structural components of the gap junctions. The chain is Innexin inx7 (Inx7) from Drosophila melanogaster (Fruit fly).